A 115-amino-acid chain; its full sequence is Vespryn (115 aa).

Positions 1–15 (MTWLLLCLLAQYENG) are cleaved as a signal peptide. The B30.2/SPRY domain occupies 22–115 (SSSAKPYKTS…VKRKDHLRLT (94 aa)).

The protein belongs to the ohanin/vespryn family. Expressed by the venom gland.

Its subcellular location is the secreted. Functionally, neurotoxin that produces dose-dependent hypolocomotion and hyperalgesia in mice. May directly act on the central nervous system, as it is 6500-fold more potent when administered intracerebroventricularly than intraperitoneal. The polypeptide is Vespryn (Pogona barbata (Bearded dragon)).